Reading from the N-terminus, the 83-residue chain is Protein MATERNALLY EXPRESSED GENE 3 (83 aa).

Positions 1–22 are cleaved as a signal peptide; sequence MQWLAFVAPRWRCVCDQELSAQ. A disulfide bridge links cysteine 60 with cysteine 82.

The protein belongs to the MEG family. Expressed in endosperm, anther and pollen.

The polypeptide is Protein MATERNALLY EXPRESSED GENE 3 (MEG3) (Zea mays (Maize)).